The primary structure comprises 648 residues: Phosphatidylinositol-3,5-bisphosphate 3-phosphatase MTMR14 (648 aa).

Residues 1 to 19 (MAGARAAAAASAGSTASSG) are compositionally biased toward low complexity. The interval 1 to 27 (MAGARAAAAASAGSTASSGSPPPQEPG) is disordered. K193 bears the N6-acetyllysine mark. N-linked (GlcNAc...) asparagine glycosylation is found at N225 and N240. C329 functions as the Phosphocysteine intermediate in the catalytic mechanism. Residues G332, W333, D334, R335, and R381 each contribute to the a 1,2-diacyl-sn-glycero-3-phospho-(1D-myo-inositol-3,5-bisphosphate) site. Residues G332, W333, D334, R335, and R381 each coordinate a 1,2-diacyl-sn-glycero-3-phospho-(1D-myo-inositol-3-phosphate). The tract at residues 471-544 (PTQAAWRKSH…PRSVDHPLPG (74 aa)) is disordered. Basic and acidic residues predominate over residues 494 to 506 (PSEERLPSHHGLT). A Phosphoserine modification is found at S516. N517 carries an N-linked (GlcNAc...) asparagine glycan. Phosphoserine occurs at positions 528, 578, and 622. R636 carries the post-translational modification Omega-N-methylarginine.

The protein belongs to the protein-tyrosine phosphatase family. Non-receptor class myotubularin subfamily.

The protein localises to the cytoplasm. The enzyme catalyses a 1,2-diacyl-sn-glycero-3-phospho-(1D-myo-inositol-3,5-bisphosphate) + H2O = a 1,2-diacyl-sn-glycero-3-phospho-(1D-myo-inositol-5-phosphate) + phosphate. It catalyses the reaction a 1,2-diacyl-sn-glycero-3-phospho-(1D-myo-inositol-3-phosphate) + H2O = a 1,2-diacyl-sn-glycero-3-phospho-(1D-myo-inositol) + phosphate. Lipid phosphatase that specifically dephosphorylates the D-3 position of phosphatidylinositol 3-phosphate and phosphatidylinositol 3,5-bisphosphate, generating phosphatidylinositol and phosphatidylinositol 5-phosphate. This is Phosphatidylinositol-3,5-bisphosphate 3-phosphatase MTMR14 from Mus musculus (Mouse).